The sequence spans 448 residues: MLWLALGPFPAMENQVLVIRIKIPNSGAVDWTVHSGPQLLFRDVLDVIGQVLPEATTTAFEYEDEDGDRITVRSDEEMKAMLSYYYSTVMEQQVNGQLIEPLQIFPRACKPPGERNIHGLKVNTRAGPSQHSSPAVSDSLPSNSLKKSSAELKKILANGQMNEQDIRYRDTLGHGNGGTVYKAYHVPSGKILAVKVILLDITLELQKQIMSELEILYKCDSSYIIGFYGAFFVENRISICTEFMDGGSLDVYRKMPEHVLGRIAVAVVKGLTYLWSLKILHRDVKPSNMLVNTRGQVKLCDFGVSTQLVNSIAKTYVGTNAYMAPERISGEQYGIHSDVWSLGISFMELALGRFPYPQIQKNQGSLMPLQLLQCIVDEDSPVLPVGEFSEPFVHFITQCMRKQPKERPAPEELMGHPFIVQFNDGNAAVVSMWVCRALEERRSQQGPP.

Residues 18–25 are interaction with MAPK7; sequence VIRIKIPN. Residues 18–109 enclose the PB1 domain; the sequence is VIRIKIPNSG…EPLQIFPRAC (92 aa). Residues 64–68 form an interaction with MAP3K2/MAP3K3 region; it reads DEDGD. The disordered stretch occupies residues 116–144; the sequence is NIHGLKVNTRAGPSQHSSPAVSDSLPSNS. The segment at 117 to 131 is interaction with MAPK7; it reads IHGLKVNTRAGPSQH. A compositionally biased stretch (polar residues) spans 126 to 144; the sequence is AGPSQHSSPAVSDSLPSNS. In terms of domain architecture, Protein kinase spans 166–409; sequence IRYRDTLGHG…MRKQPKERPA (244 aa). ATP contacts are provided by residues 172–180 and Lys195; that span reads LGHGNGGTV. The Proton acceptor role is filled by Asp283. Position 311 is a phosphoserine (Ser311). Thr315 carries the post-translational modification Phosphothreonine.

This sequence belongs to the protein kinase superfamily. STE Ser/Thr protein kinase family. MAP kinase kinase subfamily. In terms of assembly, interacts with PARD6A, MAP3K3 and MAPK7. Forms a complex with SQSTM1 and PRKCZ or PRKCI. (Microbial infection) Interacts with Yersinia YopJ. It depends on Mg(2+) as a cofactor. Activated by phosphorylation on Ser/Thr by MAP kinase kinase kinases. In terms of processing, (Microbial infection) Yersinia YopJ may acetylate Ser/Thr residues, preventing phosphorylation and activation, thus blocking the MAPK signaling pathway. As to expression, expressed in many adult tissues. Abundant in heart and skeletal muscle.

The catalysed reaction is L-seryl-[protein] + ATP = O-phospho-L-seryl-[protein] + ADP + H(+). The enzyme catalyses L-threonyl-[protein] + ATP = O-phospho-L-threonyl-[protein] + ADP + H(+). It catalyses the reaction L-tyrosyl-[protein] + ATP = O-phospho-L-tyrosyl-[protein] + ADP + H(+). Its function is as follows. Acts as a scaffold for the formation of a ternary MAP3K2/MAP3K3-MAP3K5-MAPK7 signaling complex. Activation of this pathway appears to play a critical role in protecting cells from stress-induced apoptosis, neuronal survival and cardiac development and angiogenesis. As part of the MAPK/ERK signaling pathway, acts as a negative regulator of apoptosis in cardiomyocytes via promotion of STUB1/CHIP-mediated ubiquitination and degradation of ICER-type isoforms of CREM. The protein is Dual specificity mitogen-activated protein kinase kinase 5 (MAP2K5) of Homo sapiens (Human).